A 314-amino-acid chain; its full sequence is tRNA dimethylallyltransferase (314 aa).

10–17 contributes to the ATP binding site; it reads GPTAVGKT. Residue 12–17 coordinates substrate; the sequence is TAVGKT. Interaction with substrate tRNA stretches follow at residues 35-38, 160-164, 239-244, and 272-279; these read DSMQ, RRVIR, QAIGYK, and KRQLTWFR.

Belongs to the IPP transferase family. In terms of assembly, monomer. The cofactor is Mg(2+).

It catalyses the reaction adenosine(37) in tRNA + dimethylallyl diphosphate = N(6)-dimethylallyladenosine(37) in tRNA + diphosphate. Its function is as follows. Catalyzes the transfer of a dimethylallyl group onto the adenine at position 37 in tRNAs that read codons beginning with uridine, leading to the formation of N6-(dimethylallyl)adenosine (i(6)A). The chain is tRNA dimethylallyltransferase (miaA) from Halalkalibacterium halodurans (strain ATCC BAA-125 / DSM 18197 / FERM 7344 / JCM 9153 / C-125) (Bacillus halodurans).